Consider the following 979-residue polypeptide: Putative disease resistance protein RGA1 (979 aa).

An NB-ARC domain is found at 143 to 437 (GSVLTEPQVY…MAHGFLLSKG (295 aa)). An ATP-binding site is contributed by 182–189 (GMGGLGKT). LRR repeat units lie at residues 524 to 547 (FVSL…IGDL), 549 to 570 (HLRY…RLCK), 571 to 594 (LQNL…QTSK), 595 to 619 (LGSL…GLLT), 637 to 661 (LGEL…KKDT), 748 to 773 (LPCL…VHPG), 823 to 841 (VKTL…SISN), 842 to 866 (LRAL…MFKS), 868 to 890 (ANLK…SLAS), 891 to 915 (LNAL…GVKG), 917 to 939 (TSLT…GLQH), and 940 to 965 (LTAL…IGED).

Belongs to the disease resistance NB-LRR family.

Functionally, disease resistance protein. Resistance proteins guard the plant against pathogens that contain an appropriate avirulence protein via a direct or indirect interaction with this avirulence protein. That triggers a defense system which restricts the pathogen growth. The chain is Putative disease resistance protein RGA1 (RGA1) from Solanum bulbocastanum (Wild potato).